A 621-amino-acid polypeptide reads, in one-letter code: Ubiquitin-like-specific protease 1 (621 aa).

Serine 2 is subject to N-acetylserine. 2 positions are modified to phosphoserine: serine 21 and serine 25. 2 disordered regions span residues 116 to 150 (FDGSEVEASGNSDVESRSSGSRSSDVPYGLRENYS) and 169 to 196 (RRRIESEGVGTPSTSPISSLASQKSNCD). Over residues 124-141 (SGNSDVESRSSGSRSSDV) the composition is skewed to low complexity. The residue at position 179 (threonine 179) is a Phosphothreonine. Polar residues predominate over residues 179-196 (TPSTSPISSLASQKSNCD). Serine 264 is subject to Phosphoserine. The interval 432–621 (NIEITVRDFK…AHLILTDALK (190 aa)) is protease. Residues histidine 514, aspartate 531, and cysteine 580 contribute to the active site.

It belongs to the peptidase C48 family.

It carries out the reaction Hydrolysis of the alpha-linked peptide bond in the sequence Gly-Gly-|-Ala-Thr-Tyr at the C-terminal end of the small ubiquitin-like modifier (SUMO) propeptide, Smt3, leading to the mature form of the protein. A second reaction involves the cleavage of an epsilon-linked peptide bond between the C-terminal glycine of the mature SUMO and the lysine epsilon-amino group of the target protein.. Protease that catalyzes two essential functions in the SUMO pathway: processing of full-length SMT3 to its mature form and deconjugation of SMT3 from targeted proteins. Has an essential role in the G2/M phase of the cell cycle. In Saccharomyces cerevisiae (strain ATCC 204508 / S288c) (Baker's yeast), this protein is Ubiquitin-like-specific protease 1 (ULP1).